A 418-amino-acid chain; its full sequence is Beta-arrestin-1 (418 aa).

The tract at residues 1 to 163 is interaction with SRC; it reads MGDKGTRVFK…LEEKIHKRNS (163 aa). The interval 45–86 is interaction with CHRM2; sequence PEYLKERRVYVTLTCAFRYGREDLDVLGLTFRKDLFVANVQS. Phosphotyrosine is present on Y47. Residues K250, M255, K324, and K326 each contribute to the 1D-myo-inositol hexakisphosphate site. The interaction with TRAF6 stretch occupies residues 318 to 418; sequence IVSYKVKVKL…GTGSPQLNNR (101 aa). The segment at 353 to 375 is disordered; sequence HPKPKEEPPHREVPENETPVDTN. The segment covering 355 to 366 has biased composition (basic and acidic residues); that stretch reads KPKEEPPHREVP. The [DE]-X(1,2)-F-X-X-[FL]-X-X-X-R motif signature appears at 385 to 395; the sequence is DIVFEDFARQR. The disordered stretch occupies residues 397–418; the sequence is KGMKDDKEEEEDGTGSPQLNNR. S412 bears the Phosphoserine; by GRK5 mark.

This sequence belongs to the arrestin family. As to quaternary structure, monomer. Homodimer. Homooligomer; the self-association is mediated by InsP6-binding. Heterooligomer with ARRB2; the association is mediated by InsP6-binding. Interacts with GPR143. Interacts with ADRB2 (phosphorylated). Interacts with CHRM2 (phosphorylated). Interacts with LHCGR. Interacts with CYTH2 and CASR. Interacts with AP2B1 (dephosphorylated at 'Tyr-737'); phosphorylation of AP2B1 at 'Tyr-737' disrupts the interaction. Interacts (dephosphorylated at Ser-412) with CLTC. Interacts with CCR2 and GRK2. Interacts with CRR5. Interacts with PTAFR (phosphorylated on serine residues). Interacts with CLTC and MAP2K3. Interacts with CREB1. Interacts with TRAF6. Interacts with IGF1R and MDM2. Interacts with C5AR1. Interacts with PDE4D. Interacts with SRC (via the SH3 domain and the protein kinase domain); the interaction is independent of the phosphorylation state of SRC C-terminus. Interacts with TACR1. Interacts with RAF1. Interacts with CHUK, IKBKB and MAP3K14. Interacts with DVL1; the interaction is enhanced by phosphorylation of DVL1. Interacts with DVL2; the interaction is enhanced by phosphorylation of DVL2. Interacts with IGF1R. Associates with MAP kinase p38. Part of a MAPK signaling complex consisting of TACR1, ARRB1, SRC, MAPK1 (activated) and MAPK3 (activated). Part of a MAPK signaling complex consisting of F2RL1, ARRB1, RAF1, MAPK1 (activated) and MAPK3 (activated). Interacts with MAP2K4/MKK4. Interacts with HCK and CXCR1 (phosphorylated). Interacts with ACKR3 and ACKR4. Interacts with ARRDC1; the interaction is direct. Interacts with GPR61, GPR62 and GPR135. In terms of processing, constitutively phosphorylated at Ser-412 in the cytoplasm. At the plasma membrane, is rapidly dephosphorylated, a process that is required for clathrin binding and ADRB2 endocytosis but not for ADRB2 binding and desensitization. Once internalized, is rephosphorylated. Post-translationally, the ubiquitination status appears to regulate the formation and trafficking of beta-arrestin-GPCR complexes and signaling. Ubiquitination appears to occur GPCR-specific. Ubiquitinated by MDM2; the ubiquitination is required for rapid internalization of ADRB2. Deubiquitinated by USP33; the deubiquitination leads to a dissociation of the beta-arrestin-GPCR complex. Stimulation of a class A GPCR, such as ADRB2, induces transient ubiquitination and subsequently promotes association with USP33.

It localises to the cytoplasm. The protein localises to the nucleus. The protein resides in the cell membrane. Its subcellular location is the membrane. It is found in the clathrin-coated pit. It localises to the cell projection. The protein localises to the pseudopodium. The protein resides in the cytoplasmic vesicle. Its function is as follows. Functions in regulating agonist-mediated G-protein coupled receptor (GPCR) signaling by mediating both receptor desensitization and resensitization processes. During homologous desensitization, beta-arrestins bind to the GPRK-phosphorylated receptor and sterically preclude its coupling to the cognate G-protein; the binding appears to require additional receptor determinants exposed only in the active receptor conformation. The beta-arrestins target many receptors for internalization by acting as endocytic adapters (CLASPs, clathrin-associated sorting proteins) and recruiting the GPRCs to the adapter protein 2 complex 2 (AP-2) in clathrin-coated pits (CCPs). However, the extent of beta-arrestin involvement appears to vary significantly depending on the receptor, agonist and cell type. Internalized arrestin-receptor complexes traffic to intracellular endosomes, where they remain uncoupled from G-proteins. Two different modes of arrestin-mediated internalization occur. Class A receptors, like ADRB2, OPRM1, ENDRA, D1AR and ADRA1B dissociate from beta-arrestin at or near the plasma membrane and undergo rapid recycling. Class B receptors, like AVPR2, AGTR1, NTSR1, TRHR and TACR1 internalize as a complex with arrestin and traffic with it to endosomal vesicles, presumably as desensitized receptors, for extended periods of time. Receptor resensitization then requires that receptor-bound arrestin is removed so that the receptor can be dephosphorylated and returned to the plasma membrane. Involved in internalization of P2RY4 and UTP-stimulated internalization of P2RY2. Involved in phosphorylation-dependent internalization of OPRD1 ands subsequent recycling. Involved in the degradation of cAMP by recruiting cAMP phosphodiesterases to ligand-activated receptors. Beta-arrestins function as multivalent adapter proteins that can switch the GPCR from a G-protein signaling mode that transmits short-lived signals from the plasma membrane via small molecule second messengers and ion channels to a beta-arrestin signaling mode that transmits a distinct set of signals that are initiated as the receptor internalizes and transits the intracellular compartment. Acts as a signaling scaffold for MAPK pathways such as MAPK1/3 (ERK1/2). ERK1/2 activated by the beta-arrestin scaffold is largely excluded from the nucleus and confined to cytoplasmic locations such as endocytic vesicles, also called beta-arrestin signalosomes. Recruits c-Src/SRC to ADRB2 resulting in ERK activation. GPCRs for which the beta-arrestin-mediated signaling relies on both ARRB1 and ARRB2 (codependent regulation) include ADRB2, F2RL1 and PTH1R. For some GPCRs the beta-arrestin-mediated signaling relies on either ARRB1 or ARRB2 and is inhibited by the other respective beta-arrestin form (reciprocal regulation). Inhibits ERK1/2 signaling in AGTR1- and AVPR2-mediated activation (reciprocal regulation). Is required for SP-stimulated endocytosis of NK1R and recruits c-Src/SRC to internalized NK1R resulting in ERK1/2 activation, which is required for the antiapoptotic effects of SP. Is involved in proteinase-activated F2RL1-mediated ERK activity. Acts as a signaling scaffold for the AKT1 pathway. Is involved in alpha-thrombin-stimulated AKT1 signaling. Is involved in IGF1-stimulated AKT1 signaling leading to increased protection from apoptosis. Involved in activation of the p38 MAPK signaling pathway and in actin bundle formation. Involved in F2RL1-mediated cytoskeletal rearrangement and chemotaxis. Involved in AGTR1-mediated stress fiber formation by acting together with GNAQ to activate RHOA. Appears to function as signaling scaffold involved in regulation of MIP-1-beta-stimulated CCR5-dependent chemotaxis. Involved in attenuation of NF-kappa-B-dependent transcription in response to GPCR or cytokine stimulation by interacting with and stabilizing CHUK. May serve as nuclear messenger for GPCRs. Involved in OPRD1-stimulated transcriptional regulation by translocating to CDKN1B and FOS promoter regions and recruiting EP300 resulting in acetylation of histone H4. Involved in regulation of LEF1 transcriptional activity via interaction with DVL1 and/or DVL2 Also involved in regulation of receptors other than GPCRs. Involved in Toll-like receptor and IL-1 receptor signaling through the interaction with TRAF6 which prevents TRAF6 autoubiquitination and oligomerization required for activation of NF-kappa-B and JUN. Binds phosphoinositides. Binds inositolhexakisphosphate (InsP6). Involved in IL8-mediated granule release in neutrophils. Required for atypical chemokine receptor ACKR2-induced RAC1-LIMK1-PAK1-dependent phosphorylation of cofilin (CFL1) and for the up-regulation of ACKR2 from endosomal compartment to cell membrane, increasing its efficiency in chemokine uptake and degradation. Involved in the internalization of the atypical chemokine receptor ACKR3. Negatively regulates the NOTCH signaling pathway by mediating the ubiquitination and degradation of NOTCH1 by ITCH. Participates in the recruitment of the ubiquitin-protein ligase to the receptor. In Homo sapiens (Human), this protein is Beta-arrestin-1 (ARRB1).